Consider the following 209-residue polypeptide: Imidazole glycerol phosphate synthase subunit HisH (209 aa).

A Glutamine amidotransferase type-1 domain is found at 1-205 (MIAIIDYGMG…KGVVKQWKSS (205 aa)). Cysteine 79 serves as the catalytic Nucleophile. Catalysis depends on residues histidine 180 and glutamate 182.

As to quaternary structure, heterodimer of HisH and HisF.

Its subcellular location is the cytoplasm. It carries out the reaction 5-[(5-phospho-1-deoxy-D-ribulos-1-ylimino)methylamino]-1-(5-phospho-beta-D-ribosyl)imidazole-4-carboxamide + L-glutamine = D-erythro-1-(imidazol-4-yl)glycerol 3-phosphate + 5-amino-1-(5-phospho-beta-D-ribosyl)imidazole-4-carboxamide + L-glutamate + H(+). The enzyme catalyses L-glutamine + H2O = L-glutamate + NH4(+). It functions in the pathway amino-acid biosynthesis; L-histidine biosynthesis; L-histidine from 5-phospho-alpha-D-ribose 1-diphosphate: step 5/9. IGPS catalyzes the conversion of PRFAR and glutamine to IGP, AICAR and glutamate. The HisH subunit catalyzes the hydrolysis of glutamine to glutamate and ammonia as part of the synthesis of IGP and AICAR. The resulting ammonia molecule is channeled to the active site of HisF. In Bacillus cytotoxicus (strain DSM 22905 / CIP 110041 / 391-98 / NVH 391-98), this protein is Imidazole glycerol phosphate synthase subunit HisH.